The following is a 307-amino-acid chain: Ribonuclease Z (307 aa).

Residues histidine 63, histidine 65, aspartate 67, histidine 68, histidine 141, aspartate 212, and histidine 270 each contribute to the Zn(2+) site. Catalysis depends on aspartate 67, which acts as the Proton acceptor.

Belongs to the RNase Z family. Homodimer. Zn(2+) serves as cofactor.

The catalysed reaction is Endonucleolytic cleavage of RNA, removing extra 3' nucleotides from tRNA precursor, generating 3' termini of tRNAs. A 3'-hydroxy group is left at the tRNA terminus and a 5'-phosphoryl group is left at the trailer molecule.. In terms of biological role, zinc phosphodiesterase, which displays some tRNA 3'-processing endonuclease activity. Probably involved in tRNA maturation, by removing a 3'-trailer from precursor tRNA. The polypeptide is Ribonuclease Z (Bacillus anthracis (strain A0248)).